The following is a 397-amino-acid chain: Pentatricopeptide repeat-containing protein At1g80150, mitochondrial (397 aa).

A mitochondrion-targeting transit peptide spans 1–81; sequence MLSLRHIRRF…FAFEDTVSRL (81 aa). PPR repeat units lie at residues 105 to 139, 140 to 170, 176 to 210, 211 to 245, 246 to 280, 281 to 315, 316 to 350, and 351 to 381; these read REGF…GCKR, SVKS…APSK, DAVS…GLTP, DVVT…GCKP, NLTT…QVEP, DSIT…GYKP, NLKI…KWYP, and NLDT…VHRR.

This sequence belongs to the PPR family. P subfamily.

It localises to the mitochondrion. The protein is Pentatricopeptide repeat-containing protein At1g80150, mitochondrial of Arabidopsis thaliana (Mouse-ear cress).